A 269-amino-acid chain; its full sequence is Bidirectional sugar transporter SWEET1a (269 aa).

The Extracellular portion of the chain corresponds to 1–6 (MEHIAR). A helical transmembrane segment spans residues 7–27 (FFFGVSGNVIALFLFLSPVVT). Positions 8–96 (FFGVSGNVIA…IFLIFAVDRR (89 aa)) constitute a MtN3/slv 1 domain. Over 28–42 (FWRIIRKRSTEDFSG) the chain is Cytoplasmic. The helical transmembrane segment at 43–63 (VPYNMTLLNCLLSAWYGLPFV) threads the bilayer. The Extracellular segment spans residues 64–72 (SPNNILVST). Residues 73-93 (INGTGSVIEAIYVVIFLIFAV) traverse the membrane as a helical segment. Topologically, residues 94–100 (DRRARLR) are cytoplasmic. Residues 101–121 (MLGLLSIVVSIFATVVLVSLL) form a helical membrane-spanning segment. At 122 to 129 (ALHGNARK) the chain is on the extracellular side. A helical transmembrane segment spans residues 130 to 150 (VFCGLAATIFSICMYASPLSI). A MtN3/slv 2 domain is found at 132-215 (CGLAATIFSI…ILYFIYRKNK (84 aa)). Residues 151–164 (MRLVIKTKSVEYMP) are Cytoplasmic-facing. Residues 165–185 (FLLSLAVFLCGTSWFIYGLLG) form a helical membrane-spanning segment. The Extracellular segment spans residues 186–189 (RDPF). A helical membrane pass occupies residues 190–210 (IIIPNGCGSFLGLVQLILYFI). Residues 211–269 (YRKNKGPAVPAGKGEAAAAADVEDAKKVAAAVEMADATTTNKAAADTVVGDGKVVASQV) lie on the Cytoplasmic side of the membrane.

Belongs to the SWEET sugar transporter family. In terms of assembly, forms homooligomers and/or heterooligomers.

It localises to the cell membrane. Its function is as follows. Mediates both low-affinity uptake and efflux of sugar across the plasma membrane. The polypeptide is Bidirectional sugar transporter SWEET1a (Sorghum bicolor (Sorghum)).